We begin with the raw amino-acid sequence, 166 residues long: Cyanate hydratase (166 aa).

Residues R92, E95, and S118 contribute to the active site.

This sequence belongs to the cyanase family.

It carries out the reaction cyanate + hydrogencarbonate + 3 H(+) = NH4(+) + 2 CO2. Catalyzes the reaction of cyanate with bicarbonate to produce ammonia and carbon dioxide. The sequence is that of Cyanate hydratase from Zea mays (Maize).